We begin with the raw amino-acid sequence, 306 residues long: S-methyl-5'-thioadenosine phosphorylase (306 aa).

Residues T21, 63–64 (RH), and 96–97 (SA) contribute to the phosphate site. Residue M198 participates in substrate binding. S199 contacts phosphate. Residue 222 to 224 (DYD) coordinates substrate.

It belongs to the PNP/MTAP phosphorylase family. MTAP subfamily. As to quaternary structure, homotrimer.

The protein resides in the cytoplasm. It localises to the nucleus. It catalyses the reaction S-methyl-5'-thioadenosine + phosphate = 5-(methylsulfanyl)-alpha-D-ribose 1-phosphate + adenine. The protein operates within amino-acid biosynthesis; L-methionine biosynthesis via salvage pathway; S-methyl-5-thio-alpha-D-ribose 1-phosphate from S-methyl-5'-thioadenosine (phosphorylase route): step 1/1. Functionally, catalyzes the reversible phosphorylation of S-methyl-5'-thioadenosine (MTA) to adenine and 5-methylthioribose-1-phosphate. Involved in the breakdown of MTA, a major by-product of polyamine biosynthesis. Responsible for the first step in the methionine salvage pathway after MTA has been generated from S-adenosylmethionine. Has broad substrate specificity with 6-aminopurine nucleosides as preferred substrates. This Sclerotinia sclerotiorum (strain ATCC 18683 / 1980 / Ss-1) (White mold) protein is S-methyl-5'-thioadenosine phosphorylase.